A 344-amino-acid polypeptide reads, in one-letter code: Lipase chaperone (344 aa).

Residues Val-14 to Ala-34 form a helical membrane-spanning segment.

The protein belongs to the lipase chaperone family.

Its subcellular location is the cell inner membrane. May be involved in the folding of the extracellular lipase during its passage through the periplasm. This Burkholderia ambifaria (strain MC40-6) protein is Lipase chaperone.